A 340-amino-acid chain; its full sequence is MTDTAKYEKSSARCWICYEEYDKKLCSLSNDSWRRPCRCSLIAHESCLISYITRSGSTRCPQCLTAYRIAKPPKEKSWAVNVLGIGHSLEAGLAQVTFGVGSCLGITKFIYSIFKQTGIWICKQVADESSLIEMLKKPVFSSVVLPLLPCMLVRFYEAPPYDIAFSLYTHFSIYSCAEKISNTSLLLCTLPWVRSLYKELMTRIFDGIVIGADGEFEDSETDWFRQFEAQVEHRNQVEDVNEREDTESEFWILLSVAHVFLDAFTTKILRIVRPILLFPLAGKFLGRFIPGNFTKLEKSIIGAFAALVFKDIFVYGFIAWRKRKPWSIRILDNPRRVSDS.

An RING-CH-type zinc finger spans residues 6-70 (KYEKSSARCW…PQCLTAYRIA (65 aa)). The Zn(2+) site is built by C14, C17, C37, C39, H44, C47, C60, and C63. 3 helical membrane-spanning segments follow: residues 249 to 269 (EFWI…TKIL), 274 to 294 (PILL…GNFT), and 300 to 320 (IIGA…FIAW).

The protein localises to the membrane. This is an uncharacterized protein from Schizosaccharomyces pombe (strain 972 / ATCC 24843) (Fission yeast).